Consider the following 231-residue polypeptide: MFRKLAAECFGTFWLVFGGCGSAVLAAGFPELGIGFAGVALAFGLTVLTMAFAVGHISGGHFNPAVTIGLWAGGRFPAKEVVGYVIAQVVGGIVAAALLYLIASGKTGFDAAASGFASNGYGEHSPGGYSMLSALVVELVLSAGFLLVIHGATDKFAPAGFAPIAIGLALTLIHLISIPVTNTSVNPARSTAVAIFQGGWALEQLWFFWVVPIVGGIIGGLIYRTLLEKRD.

A run of 2 helical transmembrane segments spans residues Cys-9–Phe-29 and Ile-34–Val-54. The NPA 1 motif lies at Asn-63–Ala-65. A run of 3 helical transmembrane segments spans residues Val-82 to Ile-102, Tyr-129 to Ile-149, and Phe-156 to Ile-176. The short motif at Asn-186–Ala-188 is the NPA 2 element. The helical transmembrane segment at Leu-202–Ile-222 threads the bilayer.

The protein belongs to the MIP/aquaporin (TC 1.A.8) family. Homotetramer.

It is found in the cell inner membrane. It carries out the reaction H2O(in) = H2O(out). In terms of biological role, channel that permits osmotically driven movement of water in both directions. It is involved in the osmoregulation and in the maintenance of cell turgor during volume expansion in rapidly growing cells. It mediates rapid entry or exit of water in response to abrupt changes in osmolarity. This chain is Aquaporin Z, found in Escherichia coli O6:H1 (strain CFT073 / ATCC 700928 / UPEC).